Here is a 149-residue protein sequence, read N- to C-terminus: Endoribonuclease YbeY (149 aa).

Positions 116, 120, and 126 each coordinate Zn(2+).

This sequence belongs to the endoribonuclease YbeY family. The cofactor is Zn(2+).

It localises to the cytoplasm. Functionally, single strand-specific metallo-endoribonuclease involved in late-stage 70S ribosome quality control and in maturation of the 3' terminus of the 16S rRNA. This is Endoribonuclease YbeY from Nocardioides sp. (strain ATCC BAA-499 / JS614).